Here is a 483-residue protein sequence, read N- to C-terminus: Shaker-related potassium channel tsha2 (483 aa).

Residues 1 to 165 (MTVVSCEIQD…YPESSGPARM (165 aa)) are Cytoplasmic-facing. Residues 166-186 (IAVVSVSVIVISIVIFCLETL) traverse the membrane as a helical segment. Residues 187 to 220 (PQFREDTSANLPLSNHHTTNGTTLHKKPNLFTDP) lie on the Extracellular side of the membrane. The helical transmembrane segment at 221–241 (FFMVETLCIVWFSFEFLVRFL) threads the bilayer. Over 242–252 (SCPSKPAFFKN) the chain is Cytoplasmic. Residue Cys-243 is the site of S-palmitoyl cysteine attachment. A helical membrane pass occupies residues 253–273 (AMNSIDILAIAPYFITLGLEL). Residues 274–324 (AEQQEAGSEQAMSLAILRVIRLVRVFRIFKLSRHSKGLQILGQTLHASISE) are Extracellular-facing. A helical; Voltage-sensor membrane pass occupies residues 325–345 (LGLLIFFLLIGVILFSSAVYF). The Cytoplasmic segment spans residues 346 to 353 (AEADDPES). The helical transmembrane segment at 354 to 374 (GFSSIPAAFWWAVVSMTTVGY) threads the bilayer. Residues 371-376 (TVGYGD) carry the Selectivity filter motif. At 375–385 (GDMCPVTIGGK) the chain is on the extracellular side. A helical membrane pass occupies residues 386–406 (IVGSMCAIAGVLTIALPVPVI). Residues 407-483 (VSNFNYFYHR…EHYTGKLTDV (77 aa)) lie on the Cytoplasmic side of the membrane. Position 426 is a phosphotyrosine (Tyr-426). A Phosphothreonine modification is found at Thr-430. Polar residues predominate over residues 440–452 (EFKSTSDSRQSLT). Residues 440–459 (EFKSTSDSRQSLTKSEDTEE) are disordered. The short motif at 481 to 483 (TDV) is the PDZ-binding element.

This sequence belongs to the potassium channel family. A (Shaker) (TC 1.A.1.2) subfamily. As to quaternary structure, heterotetramer of potassium channel proteins. Binds PDZ domains of dlg1, dlg2 and dlg4. As to expression, expressed in oligodendrocytes and astrocytes.

The protein localises to the membrane. In terms of biological role, mediates the voltage-dependent potassium ion permeability of excitable membranes. Assuming opened or closed conformations in response to the voltage difference across the membrane, the protein forms a potassium-selective channel through which potassium ions may pass in accordance with their electrochemical gradient. This chain is Shaker-related potassium channel tsha2, found in Oncorhynchus mykiss (Rainbow trout).